The primary structure comprises 405 residues: Bifunctional enzyme IspD/IspF (405 aa).

The tract at residues 1–240 is 2-C-methyl-D-erythritol 4-phosphate cytidylyltransferase; that stretch reads MTLADKPVLS…KLLLDEPKYR (240 aa). Positions 240 to 405 are 2-C-methyl-D-erythritol 2,4-cyclodiphosphate synthase; the sequence is RVGTGYDIHR…LLYKIAPLHN (166 aa). Asp246 and His248 together coordinate a divalent metal cation. Residues 246–248 and 277–278 contribute to the 4-CDP-2-C-methyl-D-erythritol 2-phosphate site; these read DIH and HS. A divalent metal cation is bound at residue His285. 4-CDP-2-C-methyl-D-erythritol 2-phosphate contacts are provided by residues 299–301, 375–378, and Arg385; these read DIG and TTTE.

This sequence in the N-terminal section; belongs to the IspD/TarI cytidylyltransferase family. IspD subfamily. In the C-terminal section; belongs to the IspF family. The cofactor is a divalent metal cation.

It catalyses the reaction 2-C-methyl-D-erythritol 4-phosphate + CTP + H(+) = 4-CDP-2-C-methyl-D-erythritol + diphosphate. The catalysed reaction is 4-CDP-2-C-methyl-D-erythritol 2-phosphate = 2-C-methyl-D-erythritol 2,4-cyclic diphosphate + CMP. Its pathway is isoprenoid biosynthesis; isopentenyl diphosphate biosynthesis via DXP pathway; isopentenyl diphosphate from 1-deoxy-D-xylulose 5-phosphate: step 2/6. It participates in isoprenoid biosynthesis; isopentenyl diphosphate biosynthesis via DXP pathway; isopentenyl diphosphate from 1-deoxy-D-xylulose 5-phosphate: step 4/6. Bifunctional enzyme that catalyzes the formation of 4-diphosphocytidyl-2-C-methyl-D-erythritol from CTP and 2-C-methyl-D-erythritol 4-phosphate (MEP) (IspD), and catalyzes the conversion of 4-diphosphocytidyl-2-C-methyl-D-erythritol 2-phosphate (CDP-ME2P) to 2-C-methyl-D-erythritol 2,4-cyclodiphosphate (ME-CPP) with a corresponding release of cytidine 5-monophosphate (CMP) (IspF). The polypeptide is Bifunctional enzyme IspD/IspF (Wolbachia sp. subsp. Brugia malayi (strain TRS)).